The sequence spans 212 residues: Bcl-2-related ovarian killer protein (212 aa).

S7 carries the post-translational modification Phosphoserine. Residues 15–45 (MDAFDRSPTDKELVAQAKALGREYVHARLLR) form an interactions with ITPR1 region. Glycyl lysine isopeptide (Lys-Gly) (interchain with G-Cter in ubiquitin) cross-links involve residues K25 and K32. The short motif at 32–44 (KALGREYVHARLL) is the BH4 element. The short motif at 66 to 82 (VCAVLLRLGDELEMIRP) is the BH3 element. Residues 70-78 (LLRLGDELE) are nuclear export signal. The short motif at 112-131 (HIFSAGITWGKVVSLYAVAA) is the BH1 element. Glycyl lysine isopeptide (Lys-Gly) (interchain with G-Cter in ubiquitin) cross-links involve residues K159 and K176. Positions 164-178 (WLRRRGGWTDVLKCV) match the BH2 motif. The chain crosses the membrane as a helical span at residues 189–209 (WLVAALCSFGRFLKAAFFVLL).

The protein belongs to the Bcl-2 family. As to quaternary structure, monomer; positively regulates apoptotic process. Homodimer. Heterodimer. Oligomer; promoted by apoptotic stimuli and BH3-only proteins; mediates constitutive activation. Interacts (via BH4 domain) with ITPR1; enhances BOK expression and stabilization; limits apoptosis and prevents ubiquitination and then degradation; protects ITPR1 from proteolysis by CASP3 during apoptosis. Interacts with ITPR2 and ITPR3; binds most strongly to ITPR2, and barely to ITPR3; regulates their expression. Interacts with XPO1; translocates to the cytoplasm. Interacts with BNIP3; promotes oligomerization. Ubiquitinated by AMFR/gp78 E3 ubiquitin ligase complex; mediates degradation by ubiquitin-proteasome pathway in a VCP/p97-dependent manner; prevents from pro-apoptotic activity; promotes degradation of newly synthesized proteins that are not ITPR1 associated. As to expression, expressed mainly in oocytes; weak expression in granulosa cells of the developing follicles. In adult human ovaries, expressed in granulosa cells at all follicular stages, but expression in primordial/primary follicles granulosa cell is stronger than in secondary and antral follicles.

The protein resides in the mitochondrion membrane. The protein localises to the endoplasmic reticulum membrane. It localises to the mitochondrion inner membrane. Its subcellular location is the cytoplasm. It is found in the nucleus. The protein resides in the mitochondrion. The protein localises to the endoplasmic reticulum. It localises to the mitochondrion outer membrane. Its subcellular location is the early endosome membrane. It is found in the recycling endosome membrane. The protein resides in the nucleus outer membrane. The protein localises to the golgi apparatus. It localises to the cis-Golgi network membrane. Its subcellular location is the trans-Golgi network membrane. It is found in the membrane. In terms of biological role, apoptosis regulator that functions through different apoptotic signaling pathways. Plays a roles as pro-apoptotic protein that positively regulates intrinsic apoptotic process in a BAX- and BAK1-dependent manner or in a BAX- and BAK1-independent manner. In response to endoplasmic reticulum stress promotes mitochondrial apoptosis through downstream BAX/BAK1 activation and positive regulation of PERK-mediated unfolded protein response. Activates apoptosis independently of heterodimerization with survival-promoting BCL2 and BCL2L1 through induction of mitochondrial outer membrane permeabilization, in a BAX- and BAK1-independent manner, in response to inhibition of ERAD-proteasome degradation system, resulting in cytochrome c release. In response to DNA damage, mediates intrinsic apoptotic process in a TP53-dependent manner. Plays a role in granulosa cell apoptosis by CASP3 activation. Plays a roles as anti-apoptotic protein during neuronal apoptotic process, by negatively regulating poly ADP-ribose polymerase-dependent cell death through regulation of neuronal calcium homeostasis and mitochondrial bioenergetics in response to NMDA excitation. In addition to its role in apoptosis, may regulate trophoblast cell proliferation during the early stages of placental development, by acting on G1/S transition through regulation of CCNE1 expression. May also play a role as an inducer of autophagy by disrupting interaction between MCL1 and BECN1. Pro-apoptotic molecule exerting its function through the mitochondrial pathway. This is Bcl-2-related ovarian killer protein from Homo sapiens (Human).